The chain runs to 65 residues: MNQGRIWTVVSPTVGLPLLLGSVAAIAFAVHFAVLENTSWVAAFMNGKSVAAAPAPAAPAAPAKK.

Residues 1–11 (MNQGRIWTVVS) lie on the Cytoplasmic side of the membrane. A helical transmembrane segment spans residues 12 to 35 (PTVGLPLLLGSVAAIAFAVHFAVL). Residue His-31 participates in a bacteriochlorophyll binding. The Periplasmic portion of the chain corresponds to 36-65 (ENTSWVAAFMNGKSVAAAPAPAAPAAPAKK).

The protein belongs to the antenna complex alpha subunit family. The core complex is formed by different alpha and beta chains, binding bacteriochlorophyll molecules, and arranged most probably in tetrameric structures disposed around the reaction center. The non-pigmented gamma chains may constitute additional components.

It localises to the cell inner membrane. Functionally, antenna complexes are light-harvesting systems, which transfer the excitation energy to the reaction centers. In Rhodopseudomonas palustris, this protein is Light-harvesting protein B-800-850 alpha chain C (pucAC).